A 765-amino-acid polypeptide reads, in one-letter code: FHF complex subunit HOOK interacting protein 2A (765 aa).

2 disordered regions span residues 193 to 236 (TLKG…DHLS) and 532 to 561 (TDIS…KNDG). Polar residues-rich tracts occupy residues 196 to 208 (GQDS…GQSR) and 535 to 550 (SPEN…SSSP).

It belongs to the FHIP family. Expressed in all tissues tested, highly expressed brain. In terms of tissue distribution, only detected at high levels in testis.

Its function is as follows. Required for proper functioning of the nervous system. The sequence is that of FHF complex subunit HOOK interacting protein 2A from Homo sapiens (Human).